A 155-amino-acid polypeptide reads, in one-letter code: Fibroblast growth factor 1 (155 aa).

Residues 1–15 constitute a propeptide that is removed on maturation; it reads MAEGDITTFNAITES. Position 33 (asparagine 33) interacts with heparin. The segment at 127–143 is heparin-binding; sequence KKNGASKKGSRTHYGQK.

This sequence belongs to the heparin-binding growth factors family.

The protein resides in the secreted. It is found in the cytoplasm. It localises to the cell cortex. The protein localises to the cytosol. Its subcellular location is the nucleus. In terms of biological role, plays an important role in the regulation of cell survival, cell division, angiogenesis, cell differentiation and cell migration. Functions as a potent mitogen in vitro. Acts as a ligand for FGFR1 and integrins. Binds to FGFR1 in the presence of heparin leading to FGFR1 dimerization and activation via sequential autophosphorylation on tyrosine residues which act as docking sites for interacting proteins, leading to the activation of several signaling cascades. Binds to integrins. Its binding to integrins and subsequent ternary complex formation with integrins and FGFR1 are essential for FGF1 signaling. This is Fibroblast growth factor 1 (fgf1) from Xenopus laevis (African clawed frog).